Consider the following 360-residue polypeptide: Phosphoserine aminotransferase (360 aa).

Position 41 (arginine 41) interacts with L-glutamate. Pyridoxal 5'-phosphate is bound by residues 75–76 (GR), tryptophan 101, threonine 152, aspartate 172, and glutamine 195. Lysine 196 carries the N6-(pyridoxal phosphate)lysine modification. 237-238 (NT) is a binding site for pyridoxal 5'-phosphate.

It belongs to the class-V pyridoxal-phosphate-dependent aminotransferase family. SerC subfamily. As to quaternary structure, homodimer. Pyridoxal 5'-phosphate is required as a cofactor.

It is found in the cytoplasm. It catalyses the reaction O-phospho-L-serine + 2-oxoglutarate = 3-phosphooxypyruvate + L-glutamate. The catalysed reaction is 4-(phosphooxy)-L-threonine + 2-oxoglutarate = (R)-3-hydroxy-2-oxo-4-phosphooxybutanoate + L-glutamate. The protein operates within amino-acid biosynthesis; L-serine biosynthesis; L-serine from 3-phospho-D-glycerate: step 2/3. Its pathway is cofactor biosynthesis; pyridoxine 5'-phosphate biosynthesis; pyridoxine 5'-phosphate from D-erythrose 4-phosphate: step 3/5. Catalyzes the reversible conversion of 3-phosphohydroxypyruvate to phosphoserine and of 3-hydroxy-2-oxo-4-phosphonooxybutanoate to phosphohydroxythreonine. This is Phosphoserine aminotransferase from Pseudoalteromonas translucida (strain TAC 125).